A 365-amino-acid polypeptide reads, in one-letter code: Carbohydrate sulfotransferase 10 (365 aa).

Topologically, residues 1–6 (MRRHWL) are cytoplasmic. The helical; Signal-anchor for type II membrane protein transmembrane segment at 7–27 (LVGACGWVLLILMFVSKFINF) threads the bilayer. At 28 to 356 (SFRIPGDYAG…RYQGDFSLFD (329 aa)) the chain is on the lumenal side. Residues Asn99 and Asn104 are each glycosylated (N-linked (GlcNAc...) asparagine). Residues 132-138 (PKVGNTQ) and 194-202 (RDPFERLIS) contribute to the 3'-phosphoadenylyl sulfate site. The N-linked (GlcNAc...) asparagine glycan is linked to Asn325.

The protein belongs to the sulfotransferase 2 family.

The protein localises to the golgi apparatus membrane. Its function is as follows. Catalyzes the transfer of sulfate to position 3 of terminal glucuronic acid of both protein- and lipid-linked oligosaccharides. Participates in biosynthesis of HNK-1 carbohydrate structure, a sulfated glucuronyl-lactosaminyl residue carried by many neural recognition molecules. This Danio rerio (Zebrafish) protein is Carbohydrate sulfotransferase 10 (chst10).